Reading from the N-terminus, the 188-residue chain is Protein SSX5 (188 aa).

Positions 20–83 (KMQKAFDDIA…KRVADFQGND (64 aa)) constitute a KRAB-related domain. The disordered stretch occupies residues 78–188 (DFQGNDFDND…EISDPQEDDE (111 aa)). Over residues 112–122 (TPEKPAEEGND) the composition is skewed to basic and acidic residues. Residues 144–155 (KLNTSEKVNKTS) show a composition bias toward polar residues. A compositionally biased stretch (basic residues) spans 156 to 170 (GPKRGKHAWTHRVRE). Residues 179–188 (EISDPQEDDE) are compositionally biased toward acidic residues.

This sequence belongs to the SSX family.

Functionally, could act as a modulator of transcription. This is Protein SSX5 (SSX5) from Homo sapiens (Human).